The following is a 78-amino-acid chain: Small ribosomal subunit protein uS17 (78 aa).

The protein belongs to the universal ribosomal protein uS17 family. Part of the 30S ribosomal subunit.

In terms of biological role, one of the primary rRNA binding proteins, it binds specifically to the 5'-end of 16S ribosomal RNA. This is Small ribosomal subunit protein uS17 from Parvibaculum lavamentivorans (strain DS-1 / DSM 13023 / NCIMB 13966).